The chain runs to 406 residues: MAADRDNFLQNIENDSINNGQAMDLSPNRSSSESDSSILMNVNDIKTLRLDVAPEAKSTQSKKSLFYENSDDAEEGEIEERTNKEEGQYHHKGSKQLRFEVGKESTGKLQSHLSDGSATSGEGNVRPWEFRKVIQAEYRERLPRNYELKHWKKPSKIMIGSILRLLETNTVSALDSVFEKYEKEMNQMTHGDNNEVKRIYSKKERLLEIILTKIKKKLRQAKFPSRISERDLDIEYIYSKRQFIQNRYSQELQNNERLEAILSREQNLLEETRKLCMNLKTNNKKRLTEKLIQKDLHPVLNKAMEYTYGLESTNGFMHPDGPVTFRNDSHELNLMLNDPIKSTADVRLDKEEVLSLLPSLKEYTKKSKELKETMGQMISDSHEEEIKEVFVPHHESHQDKTEEDIH.

2 disordered regions span residues 1–37 (MAADRDNFLQNIENDSINNGQAMDLSPNRSSSESDSS) and 59–122 (TQSK…TSGE). Polar residues predominate over residues 8–21 (FLQNIENDSINNGQ). Residues 26–37 (SPNRSSSESDSS) are compositionally biased toward low complexity. The segment covering 69–78 (NSDDAEEGEI) has biased composition (acidic residues). Residue Ser70 is modified to Phosphoserine. 2 stretches are compositionally biased toward basic and acidic residues: residues 79-89 (EERTNKEEGQY) and 97-106 (LRFEVGKEST). Residues 107–122 (GKLQSHLSDGSATSGE) are compositionally biased toward polar residues. Residues 239-285 (SKRQFIQNRYSQELQNNERLEAILSREQNLLEETRKLCMNLKTNNKK) adopt a coiled-coil conformation. The interval 317–340 (MHPDGPVTFRNDSHELNLMLNDPI) is CTF19-MCM21 binding motif. The interaction with NKP1-NKP2 stretch occupies residues 353–400 (VLSLLPSLKEYTKKSKELKETMGQMISDSHEEEIKEVFVPHHESHQDK). Positions 379-406 (SDSHEEEIKEVFVPHHESHQDKTEEDIH) are disordered. Positions 380-406 (DSHEEEIKEVFVPHHESHQDKTEEDIH) are enriched in basic and acidic residues.

This sequence belongs to the CENP-Q/OKP1 family. As to quaternary structure, component of the heterotetrameric kinetochore subcomplex COMA, which consists of AME1, CTF19, MCM21 and OKP1. The COMA subcomplex is part of a larger constitutive centromere-associated network (CCAN) (also known as central kinetochore CTF19 complex in yeast), which is composed of at least AME1, CHL4, CNN1, CTF3, CTF19, IML3, MCM16, MCM21, MCM22, MHF1, MHF2, MIF2, NKP1, NKP2, OKP1 and WIP1. COMA binds the centromeric nucleosome-binding protein MIF2, and to the outer kinetochore MIND subcomplex. OKP1 interacts directly with AME1, with an NKP1-NKP2 dimer, and with CTF19-MCM21.

The protein localises to the nucleus. It localises to the chromosome. Its subcellular location is the centromere. It is found in the kinetochore. Functionally, component of the kinetochore, a multiprotein complex that assembles on centromeric DNA and attaches chromosomes to spindle microtubules, mediating chromosome segregation and sister chromatid segregation during meiosis and mitosis. Component of the inner kinetochore COMA complex, which connects centromere-associated proteins and the outer kinetochore. COMA interacts with other inner kinetochore proteins to form the inner kinetochore constitutive centromere-associated network (CCAN), which serves as a structural platform for outer kinetochore assembly. The protein is Inner kinetochore subunit OKP1 of Saccharomyces cerevisiae (strain ATCC 204508 / S288c) (Baker's yeast).